Reading from the N-terminus, the 131-residue chain is MDKKTIYFICTGNSCRSQMAEGWGKEILGEDWNVYSAGIETHGVNPRAIEAMKEVDIDISNHTSDLIDNDILKQSDLVVTLCSDADDNCPILPPNVKKEHWGFEDPAGKEWSEFQRVRDEIKLAIEKFKLR.

Catalysis depends on nucleophile residues C10, C82, and C89. 2 disulfides stabilise this stretch: C10/C82 and C82/C89.

Belongs to the low molecular weight phosphotyrosine protein phosphatase family. Thioredoxin-coupled ArsC subfamily.

The protein localises to the cytoplasm. The catalysed reaction is arsenate + [thioredoxin]-dithiol + H(+) = arsenite + [thioredoxin]-disulfide + H2O. In terms of biological role, catalyzes the reduction of arsenate [As(V)] to arsenite [As(III)]. The polypeptide is Arsenate reductase 1 (Staphylococcus saprophyticus subsp. saprophyticus (strain ATCC 15305 / DSM 20229 / NCIMB 8711 / NCTC 7292 / S-41)).